The chain runs to 232 residues: Probable transcriptional regulatory protein Bd1964 (232 aa).

The protein belongs to the TACO1 family.

It is found in the cytoplasm. This is Probable transcriptional regulatory protein Bd1964 from Bdellovibrio bacteriovorus (strain ATCC 15356 / DSM 50701 / NCIMB 9529 / HD100).